We begin with the raw amino-acid sequence, 559 residues long: CTP synthase (559 aa).

Positions Met-1–Leu-283 are amidoligase domain. Ser-25 provides a ligand contact to CTP. Residue Ser-25 participates in UTP binding. ATP-binding positions include Ser-26 to Leu-31 and Asp-83. The Mg(2+) site is built by Asp-83 and Glu-157. CTP is bound by residues Asp-164–Glu-166, Lys-204–Gln-209, and Lys-240. Residues Lys-204–Gln-209 and Lys-240 contribute to the UTP site. Residues Thr-308–Thr-557 form the Glutamine amidotransferase type-1 domain. Gly-371 provides a ligand contact to L-glutamine. Catalysis depends on Cys-398, which acts as the Nucleophile; for glutamine hydrolysis. Residues Leu-399 to Gln-402, Glu-421, and Arg-482 contribute to the L-glutamine site. Catalysis depends on residues His-530 and Glu-532.

It belongs to the CTP synthase family. As to quaternary structure, homotetramer.

It carries out the reaction UTP + L-glutamine + ATP + H2O = CTP + L-glutamate + ADP + phosphate + 2 H(+). It catalyses the reaction L-glutamine + H2O = L-glutamate + NH4(+). The enzyme catalyses UTP + NH4(+) + ATP = CTP + ADP + phosphate + 2 H(+). It functions in the pathway pyrimidine metabolism; CTP biosynthesis via de novo pathway; CTP from UDP: step 2/2. Allosterically activated by GTP, when glutamine is the substrate; GTP has no effect on the reaction when ammonia is the substrate. The allosteric effector GTP functions by stabilizing the protein conformation that binds the tetrahedral intermediate(s) formed during glutamine hydrolysis. Inhibited by the product CTP, via allosteric rather than competitive inhibition. Catalyzes the ATP-dependent amination of UTP to CTP with either L-glutamine or ammonia as the source of nitrogen. Regulates intracellular CTP levels through interactions with the four ribonucleotide triphosphates. This Corynebacterium efficiens (strain DSM 44549 / YS-314 / AJ 12310 / JCM 11189 / NBRC 100395) protein is CTP synthase.